A 49-amino-acid chain; its full sequence is Large ribosomal subunit protein bL33 (49 aa).

Residues 18-49 (ITTKNKRNNPERLELKKYSPRLKRTTLHRETK) are disordered. Basic and acidic residues predominate over residues 25–34 (NNPERLELKK).

Belongs to the bacterial ribosomal protein bL33 family.

This Lysinibacillus sphaericus (strain C3-41) protein is Large ribosomal subunit protein bL33.